Consider the following 178-residue polypeptide: Protein GrpE (178 aa).

It belongs to the GrpE family. In terms of assembly, homodimer.

It is found in the cytoplasm. Its function is as follows. Participates actively in the response to hyperosmotic and heat shock by preventing the aggregation of stress-denatured proteins, in association with DnaK and GrpE. It is the nucleotide exchange factor for DnaK and may function as a thermosensor. Unfolded proteins bind initially to DnaJ; upon interaction with the DnaJ-bound protein, DnaK hydrolyzes its bound ATP, resulting in the formation of a stable complex. GrpE releases ADP from DnaK; ATP binding to DnaK triggers the release of the substrate protein, thus completing the reaction cycle. Several rounds of ATP-dependent interactions between DnaJ, DnaK and GrpE are required for fully efficient folding. This is Protein GrpE from Rickettsia typhi (strain ATCC VR-144 / Wilmington).